Here is a 598-residue protein sequence, read N- to C-terminus: NADH-quinone oxidoreductase subunit C/D (598 aa).

The segment at 1–189 (MTDSTTHDRE…DPFELTRQKQ (189 aa)) is NADH dehydrogenase I subunit C. The interval 213–598 (DFMFLNLGPN…IDFVMSDVDR (386 aa)) is NADH dehydrogenase I subunit D.

It in the N-terminal section; belongs to the complex I 30 kDa subunit family. This sequence in the C-terminal section; belongs to the complex I 49 kDa subunit family. In terms of assembly, NDH-1 is composed of 13 different subunits. Subunits NuoB, CD, E, F, and G constitute the peripheral sector of the complex.

Its subcellular location is the cell inner membrane. The catalysed reaction is a quinone + NADH + 5 H(+)(in) = a quinol + NAD(+) + 4 H(+)(out). Functionally, NDH-1 shuttles electrons from NADH, via FMN and iron-sulfur (Fe-S) centers, to quinones in the respiratory chain. The immediate electron acceptor for the enzyme in this species is believed to be ubiquinone. Couples the redox reaction to proton translocation (for every two electrons transferred, four hydrogen ions are translocated across the cytoplasmic membrane), and thus conserves the redox energy in a proton gradient. This is NADH-quinone oxidoreductase subunit C/D from Edwardsiella ictaluri (strain 93-146).